A 236-amino-acid chain; its full sequence is Purine nucleoside phosphorylase DeoD-type (236 aa).

Histidine 4 lines the a purine D-ribonucleoside pocket. Phosphate contacts are provided by residues glycine 20, arginine 24, arginine 43, and arginine 87–threonine 90. A purine D-ribonucleoside contacts are provided by residues glutamate 179–glutamate 181 and serine 203–aspartate 204. Residue aspartate 204 is the Proton donor of the active site.

The protein belongs to the PNP/UDP phosphorylase family. In terms of assembly, homohexamer; trimer of homodimers.

It carries out the reaction a purine D-ribonucleoside + phosphate = a purine nucleobase + alpha-D-ribose 1-phosphate. The enzyme catalyses a purine 2'-deoxy-D-ribonucleoside + phosphate = a purine nucleobase + 2-deoxy-alpha-D-ribose 1-phosphate. Its function is as follows. Catalyzes the reversible phosphorolytic breakdown of the N-glycosidic bond in the beta-(deoxy)ribonucleoside molecules, with the formation of the corresponding free purine bases and pentose-1-phosphate. The chain is Purine nucleoside phosphorylase DeoD-type from Streptococcus pneumoniae (strain JJA).